A 233-amino-acid polypeptide reads, in one-letter code: Superoxide dismutase [Mn], mitochondrial (233 aa).

Residues Met1–Gly27 constitute a mitochondrion transit peptide. Residues His55, His103, Asp192, and His196 each contribute to the Mn(2+) site.

The protein belongs to the iron/manganese superoxide dismutase family. As to quaternary structure, homotetramer. The cofactor is Mn(2+). As to expression, present in all tissues examined (leaf, petiole, root, latex, callus) with young leaves showing the highest levels in intact plants.

The protein localises to the mitochondrion matrix. It catalyses the reaction 2 superoxide + 2 H(+) = H2O2 + O2. Functionally, destroys superoxide anion radicals which are normally produced within the cells and which are toxic to biological systems. The protein is Superoxide dismutase [Mn], mitochondrial (SODA) of Hevea brasiliensis (Para rubber tree).